The primary structure comprises 408 residues: Peptidase T-like protein RB0614 (408 aa).

Zn(2+) is bound at residue His-80. Asp-82 is a catalytic residue. Asp-142 is a binding site for Zn(2+). The active-site Proton acceptor is Glu-174. Residues Glu-175, Asp-198, and His-380 each contribute to the Zn(2+) site.

The protein belongs to the peptidase M20B family. The cofactor is Zn(2+).

The sequence is that of Peptidase T-like protein RB0614 from Rhizobium meliloti (strain 1021) (Ensifer meliloti).